Reading from the N-terminus, the 81-residue chain is ATP synthase subunit c, chloroplastic (81 aa).

2 helical membrane-spanning segments follow: residues 7-27 (AASV…PGIG) and 57-77 (LAFM…LLFA).

It belongs to the ATPase C chain family. F-type ATPases have 2 components, F(1) - the catalytic core - and F(0) - the membrane proton channel. F(1) has five subunits: alpha(3), beta(3), gamma(1), delta(1), epsilon(1). F(0) has four main subunits: a(1), b(1), b'(1) and c(10-14). The alpha and beta chains form an alternating ring which encloses part of the gamma chain. F(1) is attached to F(0) by a central stalk formed by the gamma and epsilon chains, while a peripheral stalk is formed by the delta, b and b' chains.

It localises to the plastid. Its subcellular location is the chloroplast thylakoid membrane. In terms of biological role, f(1)F(0) ATP synthase produces ATP from ADP in the presence of a proton or sodium gradient. F-type ATPases consist of two structural domains, F(1) containing the extramembraneous catalytic core and F(0) containing the membrane proton channel, linked together by a central stalk and a peripheral stalk. During catalysis, ATP synthesis in the catalytic domain of F(1) is coupled via a rotary mechanism of the central stalk subunits to proton translocation. Its function is as follows. Key component of the F(0) channel; it plays a direct role in translocation across the membrane. A homomeric c-ring of between 10-14 subunits forms the central stalk rotor element with the F(1) delta and epsilon subunits. This Cryptomeria japonica (Japanese cedar) protein is ATP synthase subunit c, chloroplastic.